A 439-amino-acid chain; its full sequence is Telomeric repeat-binding factor 1 (439 aa).

Positions 1–36 (MAEDVSSAAPSPRGCADGRDADPTEEQMAETERNDE) are disordered. Alanine 2 is modified (N-acetylalanine). Serine 11 carries the post-translational modification Phosphoserine. The segment covering 23 to 36 (PTEEQMAETERNDE) has biased composition (acidic residues). Residues 58–268 (EEEEEDAGLV…AAAKVVESKR (211 aa)) are TRFH mediates dimerization. Residue lysine 213 forms a Glycyl lysine isopeptide (Lys-Gly) (interchain with G-Cter in SUMO2) linkage. Position 219 is a phosphoserine; by ATM (serine 219). Residues 265–378 (ESKRTRTITS…PVTPEKHRAR (114 aa)) are interaction with RLIM. The segment at 266 to 311 (SKRTRTITSQDKPSGNDVEMETEANLDTRKSVSDKQSAVTESSEGT) is disordered. The span at 299–311 (DKQSAVTESSEGT) shows a compositional bias: polar residues. A Glycyl lysine isopeptide (Lys-Gly) (interchain with G-Cter in SUMO2) cross-link involves residue lysine 325. Positions 326 to 375 (LQHGTQQQDLNKKERRVGTPQSTKKKKESRRATESRIPVSKSQPVTPEKH) are disordered. Positions 337–356 (KKERRVGTPQSTKKKKESRR) match the Nuclear localization signal motif. Lysine 366 is covalently cross-linked (Glycyl lysine isopeptide (Lys-Gly) (interchain with G-Cter in SUMO2)). The HTH myb-type domain occupies 375–432 (HRARKRQAWLWEEDKNLRSGVRKYGEGNWSKILLHYKFNNRTSVMLKDRWRTMKKLKL). A DNA-binding region (H-T-H motif) is located at residues 403–428 (WSKILLHYKFNNRTSVMLKDRWRTMK).

As to quaternary structure, homodimer; can contain both isoforms. Found in a complex with POT1; TINF2 and TNKS1. Interacts with ATM, TINF2, TNKS1, TNKS2, PINX1, NEK2 and MAPRE1. Component of the shelterin complex (telosome) composed of TERF1, TERF2, TINF2, TERF2IP ACD and POT1. Interacts with RLIM (via N-terminus). Interacts with FBXO4. Interaction with TINF2 protects against interaction with FBXO4 and subsequent polyubiquitination and proteasomal degradation. Interacts with GNL3L; this interaction promotes homodimerization. Interacts with TIN2. Interacts with RTEL1. Interactions with GNL3L and TIN2 are mutually exclusive. Interacts with CCDC79/TERB1. Interacts with TRIOBP isoform 1; mediates TERF1 localization to the centrosome. In terms of processing, phosphorylated preferentially on Ser-219 in an ATM-dependent manner in response to ionizing DNA damage. Post-translationally, ADP-ribosylation by TNKS1 or TNKS2 diminishes its ability to bind to telomeric DNA. Ubiquitinated by RLIM/RNF12, leading to its degradation by the proteasome. Ubiquitinated by a SCF (SKP1-CUL1-F-box protein) ubiquitin-protein ligase complex, leading to its degradation by the proteasome. Highly expressed and ubiquitous. Isoform Pin2 predominates.

It localises to the nucleus. The protein localises to the cytoplasm. Its subcellular location is the cytoskeleton. The protein resides in the spindle. It is found in the chromosome. It localises to the telomere. Its function is as follows. Binds the telomeric double-stranded 5'-TTAGGG-3' repeat and negatively regulates telomere length. Involved in the regulation of the mitotic spindle. Component of the shelterin complex (telosome) that is involved in the regulation of telomere length and protection. Shelterin associates with arrays of double-stranded 5'-TTAGGG-3' repeats added by telomerase and protects chromosome ends; without its protective activity, telomeres are no longer hidden from the DNA damage surveillance and chromosome ends are inappropriately processed by DNA repair pathways. This Homo sapiens (Human) protein is Telomeric repeat-binding factor 1 (TERF1).